Reading from the N-terminus, the 630-residue chain is Pro-interleukin-16 (630 aa).

Disordered regions lie at residues 30–268 and 316–343; these read ENPG…FPLT and PKEG…ASDT. Low complexity predominate over residues 129–143; the sequence is IRASSSSSIKQRISS. Position 220 is a phosphoserine (Ser-220). Residues 321–343 show a composition bias toward polar residues; it reads SPTSSSNEDSAANGSAETSASDT. Residues 404–500 form an interaction with PPP1R12A, PPP1R12B and PPP1R12C region; that stretch reads KQLDSIHVTI…IVTRKLTAES (97 aa). 2 consecutive PDZ domains span residues 410–495 and 532–617; these read HVTI…VTRK and TVTL…IRRK.

Homotetramer. Pro-interleukin-16 interacts (via PDZ 2 domain) with PPP1R12A, PPP1R12B and PPP1R12C. Pro-interleukin-16 interacts with GRIN2A. Pro-interleukin-16 interacts with GABPB1. Pro-interleukin-16 interacts (via PDZ 3 domain) with HDAC3.

It localises to the secreted. The protein resides in the cytoplasm. The protein localises to the nucleus. In terms of biological role, interleukin-16 stimulates a migratory response in CD4+ lymphocytes, monocytes, and eosinophils. Primes CD4+ T-cells for IL-2 and IL-15 responsiveness. Also induces T-lymphocyte expression of interleukin 2 receptor. Ligand for CD4. Functionally, pro-interleukin-16 is involved in cell cycle progression in T-cells. Appears to be involved in transcriptional regulation of SKP2 and is probably part of a transcriptional repression complex on the core promoter of the SKP2 gene. May act as a scaffold for GABPB1 (the DNA-binding subunit the GABP transcription factor complex) and HDAC3 thus maintaining transcriptional repression and blocking cell cycle progression in resting T-cells. This chain is Pro-interleukin-16 (IL16), found in Macaca fascicularis (Crab-eating macaque).